The sequence spans 184 residues: ATP synthase subunit delta (184 aa).

This sequence belongs to the ATPase delta chain family. In terms of assembly, F-type ATPases have 2 components, F(1) - the catalytic core - and F(0) - the membrane proton channel. F(1) has five subunits: alpha(3), beta(3), gamma(1), delta(1), epsilon(1). F(0) has three main subunits: a(1), b(2) and c(10-14). The alpha and beta chains form an alternating ring which encloses part of the gamma chain. F(1) is attached to F(0) by a central stalk formed by the gamma and epsilon chains, while a peripheral stalk is formed by the delta and b chains.

Its subcellular location is the cell inner membrane. Its function is as follows. F(1)F(0) ATP synthase produces ATP from ADP in the presence of a proton or sodium gradient. F-type ATPases consist of two structural domains, F(1) containing the extramembraneous catalytic core and F(0) containing the membrane proton channel, linked together by a central stalk and a peripheral stalk. During catalysis, ATP synthesis in the catalytic domain of F(1) is coupled via a rotary mechanism of the central stalk subunits to proton translocation. Functionally, this protein is part of the stalk that links CF(0) to CF(1). It either transmits conformational changes from CF(0) to CF(1) or is implicated in proton conduction. The protein is ATP synthase subunit delta of Caulobacter sp. (strain K31).